The chain runs to 247 residues: Dof zinc finger protein DOF3.5 (247 aa).

The Dof-type zinc finger occupies 25-79 (PSCPRCGSSNTKFCYYNNYSLTQPRYFCKGCRRYWTKGGSLRNVPVGGGCRKSRR). Positions 27, 30, 52, and 55 each coordinate Zn(2+). The disordered stretch occupies residues 70 to 100 (VGGGCRKSRRPKSSSGNNTKTSLTANSGNPG). The segment covering 82–94 (SSSGNNTKTSLTA) has biased composition (polar residues).

The protein resides in the nucleus. In terms of biological role, transcription factor that binds specifically to a 5'-AA[AG]G-3' consensus core sequence. This is Dof zinc finger protein DOF3.5 (DOF3.5) from Arabidopsis thaliana (Mouse-ear cress).